A 174-amino-acid polypeptide reads, in one-letter code: MARFVDPLVVGRVIGEVVDLFVPSISMTAAYGDRDISNGCLVRPSAADYPPLVRISGRRNDLYTLIMTDPDAPSPSDPSMREFLHWIVVNIPGGTDASKGEEMVEYMGPRPTVGIHRYVLVLYEQKARFVDGALMPPADRPNFNTRAFAAYHQLGLPTAVVHFNSQREPANRRR.

The protein belongs to the phosphatidylethanolamine-binding protein family.

May form complexes with phosphorylated ligands by interfering with kinases and their effectors. This Oryza sativa subsp. japonica (Rice) protein is Protein MOTHER of FT and TFL1 homolog 2.